Consider the following 337-residue polypeptide: tRNA N6-adenosine threonylcarbamoyltransferase (337 aa).

The Fe cation site is built by His111 and His115. Substrate contacts are provided by residues 134–138 (LVSGG), Asp167, Gly180, and Asn272. Asp300 is a binding site for Fe cation.

Belongs to the KAE1 / TsaD family. Requires Fe(2+) as cofactor.

The protein localises to the cytoplasm. It carries out the reaction L-threonylcarbamoyladenylate + adenosine(37) in tRNA = N(6)-L-threonylcarbamoyladenosine(37) in tRNA + AMP + H(+). In terms of biological role, required for the formation of a threonylcarbamoyl group on adenosine at position 37 (t(6)A37) in tRNAs that read codons beginning with adenine. Is involved in the transfer of the threonylcarbamoyl moiety of threonylcarbamoyl-AMP (TC-AMP) to the N6 group of A37, together with TsaE and TsaB. TsaD likely plays a direct catalytic role in this reaction. The chain is tRNA N6-adenosine threonylcarbamoyltransferase from Salmonella arizonae (strain ATCC BAA-731 / CDC346-86 / RSK2980).